Reading from the N-terminus, the 122-residue chain is UPF0102 protein XOO3839 (122 aa).

Belongs to the UPF0102 family.

This Xanthomonas oryzae pv. oryzae (strain KACC10331 / KXO85) protein is UPF0102 protein XOO3839.